A 324-amino-acid chain; its full sequence is Fibronectin type III domain-containing protein 8 (324 aa).

Residues 179-280 (PDTPFIFEHT…KPYKFATLAT (102 aa)) enclose the Fibronectin type-III domain.

The polypeptide is Fibronectin type III domain-containing protein 8 (FNDC8) (Homo sapiens (Human)).